Here is a 533-residue protein sequence, read N- to C-terminus: Beta-glucosidase 24 (533 aa).

The N-terminal stretch at 1 to 26 is a signal peptide; it reads MVLQKLPLMSIGLLWLLIIVGPLVNA. Q58 provides a ligand contact to a beta-D-glucoside. Residues N64 and N88 are each glycosylated (N-linked (GlcNAc...) asparagine). A beta-D-glucoside-binding positions include H161 and 206-207; that span reads NE. E207 (proton donor) is an active-site residue. C226 and C239 are disulfide-bonded. Y355 lines the a beta-D-glucoside pocket. An N-linked (GlcNAc...) asparagine glycan is attached at N388. E427 contacts a beta-D-glucoside. E427 acts as the Nucleophile in catalysis. Residues N437, N442, and N470 are each glycosylated (N-linked (GlcNAc...) asparagine). A beta-D-glucoside is bound by residues W477, 484–485, and F493; that span reads EW. Residue N503 is glycosylated (N-linked (GlcNAc...) asparagine). The short motif at 530–533 is the Prevents secretion from ER element; the sequence is KDEL.

Belongs to the glycosyl hydrolase 1 family.

Its subcellular location is the endoplasmic reticulum lumen. The catalysed reaction is Hydrolysis of terminal, non-reducing beta-D-glucosyl residues with release of beta-D-glucose.. This Arabidopsis thaliana (Mouse-ear cress) protein is Beta-glucosidase 24.